A 296-amino-acid chain; its full sequence is Centromere protein O (296 aa).

The stretch at 17-105 (VLAHLERLET…NMKAILQAYR (89 aa)) forms a coiled coil.

This sequence belongs to the CENP-O/MCM21 family. Component of the CENPA-CAD complex, composed of CENPI, CENPK, CENPL, CENPO, CENPP, CENPQ, CENPR and CENPS. The CENPA-CAD complex interacts with the CENPA-NAC complex, at least composed of CENPA, CENPC, CENPH, CENPM, CENPN, CENPT and CENPU.

It localises to the nucleus. The protein resides in the chromosome. Its subcellular location is the centromere. It is found in the kinetochore. Functionally, component of the CENPA-CAD (nucleosome distal) complex, a complex recruited to centromeres which is involved in assembly of kinetochore proteins, mitotic progression and chromosome segregation. May be involved in incorporation of newly synthesized CENPA into centromeres via its interaction with the CENPA-NAC complex. Modulates the kinetochore-bound levels of NDC80 complex. This chain is Centromere protein O (CENPO), found in Bos taurus (Bovine).